An 814-amino-acid polypeptide reads, in one-letter code: Valine--tRNA ligase (814 aa).

The 'HIGH' region motif lies at 46-56 (PTVSGQLHIGH). The 'KMSKS' region motif lies at 536–540 (KMSKS). Lysine 539 lines the ATP pocket.

Belongs to the class-I aminoacyl-tRNA synthetase family. ValS type 2 subfamily. Monomer.

The protein localises to the cytoplasm. The catalysed reaction is tRNA(Val) + L-valine + ATP = L-valyl-tRNA(Val) + AMP + diphosphate. In terms of biological role, catalyzes the attachment of valine to tRNA(Val). As ValRS can inadvertently accommodate and process structurally similar amino acids such as threonine, to avoid such errors, it has a 'posttransfer' editing activity that hydrolyzes mischarged Thr-tRNA(Val) in a tRNA-dependent manner. This Rickettsia prowazekii (strain Madrid E) protein is Valine--tRNA ligase.